The chain runs to 595 residues: Adenine deaminase (595 aa).

Belongs to the metallo-dependent hydrolases superfamily. Adenine deaminase family. As to quaternary structure, homodimer. It depends on Mn(2+) as a cofactor.

The catalysed reaction is adenine + H2O + H(+) = hypoxanthine + NH4(+). The sequence is that of Adenine deaminase from Serratia proteamaculans (strain 568).